The chain runs to 217 residues: Probable nicotinate-nucleotide adenylyltransferase (217 aa).

The protein belongs to the NadD family.

The catalysed reaction is nicotinate beta-D-ribonucleotide + ATP + H(+) = deamido-NAD(+) + diphosphate. Its pathway is cofactor biosynthesis; NAD(+) biosynthesis; deamido-NAD(+) from nicotinate D-ribonucleotide: step 1/1. Its function is as follows. Catalyzes the reversible adenylation of nicotinate mononucleotide (NaMN) to nicotinic acid adenine dinucleotide (NaAD). In Baumannia cicadellinicola subsp. Homalodisca coagulata, this protein is Probable nicotinate-nucleotide adenylyltransferase.